The sequence spans 504 residues: Dihydrolipoamide dehydrogenase (504 aa).

A mitochondrion-targeting transit peptide spans 1-34 (MLSQRLIGRTAVKSAFRPSGLPTVVNASRWRRGY). FAD is bound by residues 69-78 (EKRGTLGGTC), Lys87, Gly151, and 180-182 (TGS). Cys78 and Cys83 are joined by a disulfide. NAD(+)-binding positions include 217–224 (GGGIIGLE), Glu240, Val275, and Gly310. Residues Asp351 and 357-360 (MLAH) contribute to the FAD site. Catalysis depends on His483, which acts as the Proton acceptor.

Belongs to the class-I pyridine nucleotide-disulfide oxidoreductase family. Eukaryotic pyruvate dehydrogenase (PDH) complexes are organized as a core consisting of the oligomeric dihydrolipoamide acetyl-transferase (E2), around which are arranged multiple copies of pyruvate dehydrogenase (E1), dihydrolipoamide dehydrogenase (E3) and protein X (E3BP) bound by non-covalent bonds. The Chaetomium thermophilum PDH complex contains 60 E2 units, 12 E3BP units, about 20 E1 units, and 12 or more E3 units. The units are organized in 1 E2 60-mer, 4 E3BP trimers, about 20 E1 tetramers, and a maximum of 12 E3 dimers. The E3BP trimers are bound inside the icosahedral core with tetrahedral symmetry. FAD serves as cofactor.

It localises to the mitochondrion. It carries out the reaction N(6)-[(R)-dihydrolipoyl]-L-lysyl-[protein] + NAD(+) = N(6)-[(R)-lipoyl]-L-lysyl-[protein] + NADH + H(+). Its function is as follows. Lipoamide dehydrogenase is a component of the alpha-ketoacid dehydrogenase complexes. This includes the pyruvate dehydrogenase complex, which catalyzes the overall conversion of pyruvate to acetyl-CoA and CO(2). Also acts as a component of the glycine cleavage system (glycine decarboxylase complex), which catalyzes the degradation of glycine. The 10-megadalton pyruvate dehydrogenase complex contains multiple copies of three enzymatic components: pyruvate dehydrogenase (E1), dihydrolipoamide acetyltransferase (E2) and lipoamide dehydrogenase (E3) and catalyzes the overall oxidative decarboxylation of pyruvate to form acetyl-CoA and CO(2). Within the complex, pyruvate and thiamine pyrophosphate (TPP or vitamin B1) are bound by pyruvate dehydrogenase E1 subunits alpha and beta and pyruvate is decarboxylated leading to the 2-carbon hydrohyethyl bound to TPP. The E2 component contains covalently-bound lipoyl cofactors and transfers the hydroxyethyl group from TPP to an oxidized form of covalently bound lipoamide, and the resulting acetyl group is then transferred to free coenzyme A to form acetyl-CoA and reduced dihydrolipoamide-E2. Finally, the flavoprotein dihydrolipoamide dehydrogenase (E3) re-oxidizes the lipoyl group of dihydrolipoamide-E2 to form lipoamide-E2 and NADH. A fourth subunit, E3BP, is responsible for tethering E3 in proximity to the core, forming the entire metabolon. The polypeptide is Dihydrolipoamide dehydrogenase (Chaetomium thermophilum (strain DSM 1495 / CBS 144.50 / IMI 039719) (Thermochaetoides thermophila)).